Reading from the N-terminus, the 263-residue chain is Small ribosomal subunit protein eS4 (263 aa).

Residues 42 to 104 (LPLIIFLRNR…TGEHFRLVYD (63 aa)) form the S4 RNA-binding domain.

The protein belongs to the eukaryotic ribosomal protein eS4 family.

The chain is Small ribosomal subunit protein eS4 (RPS4) from Gallus gallus (Chicken).